We begin with the raw amino-acid sequence, 838 residues long: Protein translocase subunit SecA (838 aa).

Residues Q87, 105–109, and D494 contribute to the ATP site; that span reads GEGKT. Basic and acidic residues-rich tracts occupy residues 781-790 and 803-819; these read EQEFQHKDET and EDAK…KVGR. The tract at residues 781–838 is disordered; that stretch reads EQEFQHKDETANVQYSGPAESAEDAKKEPKRREAPKVGRNDPCPCGSGKKYKKCHGAK. C823, C825, C834, and H835 together coordinate Zn(2+). Residues 829–838 show a composition bias toward basic residues; it reads KKYKKCHGAK.

Belongs to the SecA family. Monomer and homodimer. Part of the essential Sec protein translocation apparatus which comprises SecA, SecYEG and auxiliary proteins SecDF-YajC and YidC. Zn(2+) is required as a cofactor.

Its subcellular location is the cell inner membrane. The protein localises to the cytoplasm. It carries out the reaction ATP + H2O + cellular proteinSide 1 = ADP + phosphate + cellular proteinSide 2.. In terms of biological role, part of the Sec protein translocase complex. Interacts with the SecYEG preprotein conducting channel. Has a central role in coupling the hydrolysis of ATP to the transfer of proteins into and across the cell membrane, serving as an ATP-driven molecular motor driving the stepwise translocation of polypeptide chains across the membrane. The protein is Protein translocase subunit SecA of Solidesulfovibrio magneticus (strain ATCC 700980 / DSM 13731 / RS-1) (Desulfovibrio magneticus).